Here is a 150-residue protein sequence, read N- to C-terminus: Cytochrome c-type biogenesis protein CcmE (150 aa).

Over 1–9 (MRNLKKTRR) the chain is Cytoplasmic. Residues 10 to 30 (IQILLVAGGALVLSTALIGYG) traverse the membrane as a helical; Signal-anchor for type II membrane protein segment. Residues 31 to 150 (MRDGINFFRA…VYRDPAQPEG (120 aa)) lie on the Periplasmic side of the membrane. Positions 123 and 127 each coordinate heme.

Belongs to the CcmE/CycJ family.

Its subcellular location is the cell inner membrane. Heme chaperone required for the biogenesis of c-type cytochromes. Transiently binds heme delivered by CcmC and transfers the heme to apo-cytochromes in a process facilitated by CcmF and CcmH. The protein is Cytochrome c-type biogenesis protein CcmE of Rhodobacter capsulatus (strain ATCC BAA-309 / NBRC 16581 / SB1003).